A 398-amino-acid chain; its full sequence is Bone morphogenetic protein 2-B (398 aa).

Residues 1–23 (MVAGIHSLLLLQFYQILLSGCTG) form the signal peptide. The propeptide occupies 24 to 284 (LVPEEGKRKY…GHALHKRQKR (261 aa)). N-linked (GlcNAc...) asparagine glycosylation is found at Asn137, Asn202, Asn237, and Asn340. 3 disulfide bridges follow: Cys298/Cys363, Cys327/Cys395, and Cys331/Cys397.

It belongs to the TGF-beta family. Homodimer; disulfide-linked.

Its subcellular location is the secreted. Induces cartilage and bone formation. In Xenopus laevis (African clawed frog), this protein is Bone morphogenetic protein 2-B (bmp2-b).